The chain runs to 460 residues: NADH-ubiquinone oxidoreductase chain 4 (460 aa).

12 helical membrane passes run 20–42 (PKWLWTTTTAHSLLIASISLMWF), 61–81 (PLSTPLLVLTCWLLPLMILAS), 93–113 (QRLYITLLASLQTFLIMAFGA), 114–134 (TEIIMFYIMFEATLIPTLIII), 148–168 (TYFLFYTLAGSLPLLVALLLL), 195–215 (IWWAACLIAFLVKMPLYGVHL), 225–245 (PVAGSMVLAAVLLKLGGYGMM), 258–278 (LAYPFIILALWGIIMTGSICL), 285–304 (SLIAYSSVSHMGLVAGGILI), 308–330 (WGFSGAIILMIAHGLVSSALFCL), 351–371 (IIFPLTAVWWFIANLANLALP), and 394–414 (ILLTGLGTLITAGYSLYMFLM).

This sequence belongs to the complex I subunit 4 family.

Its subcellular location is the mitochondrion membrane. It carries out the reaction a ubiquinone + NADH + 5 H(+)(in) = a ubiquinol + NAD(+) + 4 H(+)(out). Its function is as follows. Core subunit of the mitochondrial membrane respiratory chain NADH dehydrogenase (Complex I) that is believed to belong to the minimal assembly required for catalysis. Complex I functions in the transfer of electrons from NADH to the respiratory chain. The immediate electron acceptor for the enzyme is believed to be ubiquinone. The protein is NADH-ubiquinone oxidoreductase chain 4 (MT-ND4) of Carassius auratus (Goldfish).